The following is an 89-amino-acid chain: Signal recognition particle 19 kDa protein (89 aa).

Belongs to the SRP19 family. In terms of assembly, part of the signal recognition particle protein translocation system, which is composed of SRP and FtsY. Archaeal SRP consists of a 7S RNA molecule of 300 nucleotides and two protein subunits: SRP54 and SRP19.

Its subcellular location is the cytoplasm. Functionally, involved in targeting and insertion of nascent membrane proteins into the cytoplasmic membrane. Binds directly to 7S RNA and mediates binding of the 54 kDa subunit of the SRP. The sequence is that of Signal recognition particle 19 kDa protein from Methanococcus maripaludis (strain C7 / ATCC BAA-1331).